The primary structure comprises 345 residues: D-alanine--D-alanine ligase (345 aa).

An ATP-grasp domain is found at 137 to 342 (KAAFSAAGLP…LEELVHQLLE (206 aa)). 169-224 (ETQLGYPCFIKPANLGSSVGISKATNRSELQAGLDLAASHDSRLLVEKGLQVRELE) is an ATP binding site. Mg(2+) is bound by residues Asp295, Glu309, and Asn311.

It belongs to the D-alanine--D-alanine ligase family. It depends on Mg(2+) as a cofactor. Mn(2+) serves as cofactor.

The protein localises to the cytoplasm. The enzyme catalyses 2 D-alanine + ATP = D-alanyl-D-alanine + ADP + phosphate + H(+). It participates in cell wall biogenesis; peptidoglycan biosynthesis. Cell wall formation. This Synechococcus sp. (strain RCC307) protein is D-alanine--D-alanine ligase.